A 381-amino-acid chain; its full sequence is Methanesulfonate monooxygenase (381 aa).

Belongs to the SsuD family.

It carries out the reaction an alkanesulfonate + FMNH2 + O2 = an aldehyde + FMN + sulfite + H2O + 2 H(+). In terms of biological role, catalyzes the desulfonation of aliphatic sulfonates. Shows highest activity with methanesulfonate. This Pseudomonas aeruginosa (strain ATCC 15692 / DSM 22644 / CIP 104116 / JCM 14847 / LMG 12228 / 1C / PRS 101 / PAO1) protein is Methanesulfonate monooxygenase (msuD).